A 561-amino-acid polypeptide reads, in one-letter code: uncharacterized protein (561 aa).

Transmembrane regions (helical) follow at residues 27 to 49 (ILEF…GLLI), 54 to 71 (FFGI…ALAL), 83 to 105 (LVYQ…SEFF), 115 to 137 (LTLF…IKLF), 142 to 162 (IIGA…AAMV), and 177 to 199 (VVGY…AIGA). The 82-residue stretch at 292 to 373 (QQDVPIEDTD…MSEVRRFLGD (82 aa)) folds into the RCK C-terminal domain. The next 4 helical transmembrane spans lie at 383 to 405 (LMPF…PLPG), 409 to 428 (LSLG…GALN), 441 to 463 (ASRT…SAGV), and 478 to 500 (IAGG…MPLF).

The protein belongs to the AAE transporter (TC 2.A.81) family.

The protein localises to the cell membrane. This is an uncharacterized protein from Corynebacterium diphtheriae (strain ATCC 700971 / NCTC 13129 / Biotype gravis).